A 1405-amino-acid chain; its full sequence is DNA-directed RNA polymerase subunit beta' (1405 aa).

Zn(2+)-binding residues include Cys70, Cys72, Cys85, and Cys88. Mg(2+) is bound by residues Asp460, Asp462, and Asp464. Cys815, Cys890, Cys897, and Cys900 together coordinate Zn(2+).

The protein belongs to the RNA polymerase beta' chain family. The RNAP catalytic core consists of 2 alpha, 1 beta, 1 beta' and 1 omega subunit. When a sigma factor is associated with the core the holoenzyme is formed, which can initiate transcription. It depends on Mg(2+) as a cofactor. Zn(2+) is required as a cofactor.

The catalysed reaction is RNA(n) + a ribonucleoside 5'-triphosphate = RNA(n+1) + diphosphate. In terms of biological role, DNA-dependent RNA polymerase catalyzes the transcription of DNA into RNA using the four ribonucleoside triphosphates as substrates. The sequence is that of DNA-directed RNA polymerase subunit beta' from Xanthomonas campestris pv. campestris (strain B100).